The following is a 316-amino-acid chain: Retinol dehydrogenase 12 (316 aa).

Residue 46–52 (GANTGIG) coordinates NADP(+). S175 provides a ligand contact to substrate. Y200 serves as the catalytic Proton acceptor.

Belongs to the short-chain dehydrogenases/reductases (SDR) family. Widely expressed, mostly in retina, kidney, brain, skeletal muscle, pancreas and stomach.

It is found in the endoplasmic reticulum membrane. It carries out the reaction all-trans-retinol + NADP(+) = all-trans-retinal + NADPH + H(+). The catalysed reaction is 11-cis-retinol + NADP(+) = 11-cis-retinal + NADPH + H(+). It catalyses the reaction 9-cis-retinol + NADP(+) = 9-cis-retinal + NADPH + H(+). The enzyme catalyses a 4-hydroxynonen-1-ol + NADP(+) = a 4-hydroxynonenal + NADPH + H(+). It carries out the reaction (E)-non-2-en-1-ol + NADP(+) = (E)-non-2-enal + NADPH + H(+). The catalysed reaction is (Z)-non-6-en-1-ol + NADP(+) = (Z)-non-6-enal + NADPH + H(+). It catalyses the reaction nonan-1-ol + NADP(+) = nonanal + NADPH + H(+). The protein operates within cofactor metabolism; retinol metabolism. Its function is as follows. Retinoids dehydrogenase/reductase with a clear preference for NADP. Displays high activity towards 9-cis, 11-cis and all-trans-retinal. Shows very weak activity towards 13-cis-retinol. Also exhibits activity, albeit with lower affinity than for retinaldehydes, towards lipid peroxidation products (C9 aldehydes) such as 4-hydroxynonenal and trans-2-nonenal. May play an important function in photoreceptor cells to detoxify 4-hydroxynonenal and potentially other toxic aldehyde products resulting from lipid peroxidation. Has no dehydrogenase activity towards steroids. The sequence is that of Retinol dehydrogenase 12 (RDH12) from Homo sapiens (Human).